The primary structure comprises 204 residues: Large ribosomal subunit protein uL4 (204 aa).

The interval 49–72 is disordered; that stretch reads QKNRAAVSGGGKKPWRQKGTGRAR.

This sequence belongs to the universal ribosomal protein uL4 family. As to quaternary structure, part of the 50S ribosomal subunit.

One of the primary rRNA binding proteins, this protein initially binds near the 5'-end of the 23S rRNA. It is important during the early stages of 50S assembly. It makes multiple contacts with different domains of the 23S rRNA in the assembled 50S subunit and ribosome. Its function is as follows. Forms part of the polypeptide exit tunnel. This is Large ribosomal subunit protein uL4 from Saccharophagus degradans (strain 2-40 / ATCC 43961 / DSM 17024).